Here is a 165-residue protein sequence, read N- to C-terminus: Cyclic pyranopterin monophosphate synthase (165 aa).

Substrate-binding positions include 78 to 80 (LCH) and 116 to 117 (ME). Asp131 is a catalytic residue.

This sequence belongs to the MoaC family. Homohexamer; trimer of dimers.

It catalyses the reaction (8S)-3',8-cyclo-7,8-dihydroguanosine 5'-triphosphate = cyclic pyranopterin phosphate + diphosphate. The protein operates within cofactor biosynthesis; molybdopterin biosynthesis. Functionally, catalyzes the conversion of (8S)-3',8-cyclo-7,8-dihydroguanosine 5'-triphosphate to cyclic pyranopterin monophosphate (cPMP). The polypeptide is Cyclic pyranopterin monophosphate synthase (Sinorhizobium fredii (strain NBRC 101917 / NGR234)).